We begin with the raw amino-acid sequence, 433 residues long: ATP-dependent RNA helicase SUB2 (433 aa).

Residues 1–17 are compositionally biased toward acidic residues; it reads MSAENQEELLDYSDSEE. Positions 1–39 are disordered; it reads MSAENQEELLDYSDSEEIAVPTTTQAGEGESANDKEADK. The short motif at 49-77 is the Q motif element; it reads TGFRDFLLKPELLRAIGDCGFEHPSEVQQ. The Helicase ATP-binding domain occupies 80-255; the sequence is IPQSILGTDV…KKFMQNPLEI (176 aa). 93 to 100 contributes to the ATP binding site; sequence AKSGLGKT. The short motif at 202 to 205 is the DEAD box element; the sequence is DECD. One can recognise a Helicase C-terminal domain in the interval 267–428; sequence GLQQYYIKLE…EFPEEGVDPS (162 aa).

It belongs to the DEAD box helicase family. DECD subfamily.

The protein resides in the nucleus. The enzyme catalyses ATP + H2O = ADP + phosphate + H(+). Its function is as follows. ATP-binding RNA helicase involved in transcription elongation and required for the export of mRNA out of the nucleus. SUB2 also plays a role in pre-mRNA splicing and spliceosome assembly. May be involved in rDNA and telomeric silencing, and maintenance of genome integrity. In Lodderomyces elongisporus (strain ATCC 11503 / CBS 2605 / JCM 1781 / NBRC 1676 / NRRL YB-4239) (Yeast), this protein is ATP-dependent RNA helicase SUB2 (SUB2).